The chain runs to 443 residues: Glucose-6-phosphate isomerase (443 aa).

The active-site Proton donor is the glutamate 285. Residues histidine 306 and lysine 420 contribute to the active site.

This sequence belongs to the GPI family.

It is found in the cytoplasm. The catalysed reaction is alpha-D-glucose 6-phosphate = beta-D-fructose 6-phosphate. Its pathway is carbohydrate biosynthesis; gluconeogenesis. It functions in the pathway carbohydrate degradation; glycolysis; D-glyceraldehyde 3-phosphate and glycerone phosphate from D-glucose: step 2/4. Functionally, catalyzes the reversible isomerization of glucose-6-phosphate to fructose-6-phosphate. This is Glucose-6-phosphate isomerase from Staphylococcus aureus (strain bovine RF122 / ET3-1).